Reading from the N-terminus, the 295-residue chain is MSEKQVKYPWWYGGAAGIFAVMNTHPLDLTKVRLQAAPIPKPTIVQMLRSILKNEGIVGLYAGLSASLLRQCTYTTARFGMYDALKEHVIPRDKLTNMWYLLGASMVSGALGGLAGNFADLINIRMQNDSALPLDKRRNYKNAIDGMVKIYKAEGAKSLFLTGWKPNMVRGVLMTASQVVTYDMFKNFLVTKYNMDPKKNSTHLTSSLLAGFVATTVCSPADVIKTIVMNAHKKPGHNHDSSFKILMEAINKEGPSFMFRGWVPSFTRLAPFTMLIFFAMEQLKKYRVGMPKEEA.

Solcar repeat units lie at residues Lys4–His88, Thr96–Phe188, and Lys198–Tyr286. Transmembrane regions (helical) follow at residues Tyr8–Thr24, Gly63–Tyr82, Met98–Ile122, Gly163–Tyr182, Leu204–Ile224, and Trp262–Met280.

It belongs to the mitochondrial carrier (TC 2.A.29) family. In terms of assembly, homodimer.

It is found in the mitochondrion inner membrane. Mitochondrial dicarboxylic transporter catalyzing the exchange of dicarboxylic acids like malate and succinate for inorganic phosphate. Required for growth on ethanol and acetate. The polypeptide is Mitochondrial dicarboxylate transporter (DIC1) (Candida glabrata (strain ATCC 2001 / BCRC 20586 / JCM 3761 / NBRC 0622 / NRRL Y-65 / CBS 138) (Yeast)).